Consider the following 126-residue polypeptide: Large ribosomal subunit protein bL12 (126 aa).

The protein belongs to the bacterial ribosomal protein bL12 family. Homodimer. Part of the ribosomal stalk of the 50S ribosomal subunit. Forms a multimeric L10(L12)X complex, where L10 forms an elongated spine to which 2 to 4 L12 dimers bind in a sequential fashion. Binds GTP-bound translation factors.

In terms of biological role, forms part of the ribosomal stalk which helps the ribosome interact with GTP-bound translation factors. Is thus essential for accurate translation. This Caulobacter sp. (strain K31) protein is Large ribosomal subunit protein bL12.